The sequence spans 105 residues: Met repressor (105 aa).

This sequence belongs to the MetJ family. Homodimer.

The protein resides in the cytoplasm. This regulatory protein, when combined with SAM (S-adenosylmethionine) represses the expression of the methionine regulon and of enzymes involved in SAM synthesis. In Photorhabdus laumondii subsp. laumondii (strain DSM 15139 / CIP 105565 / TT01) (Photorhabdus luminescens subsp. laumondii), this protein is Met repressor.